The chain runs to 247 residues: Serine/threonine-protein phosphatase 2A activator (247 aa).

The protein belongs to the PTPA-type PPIase family.

It is found in the cytoplasm. The enzyme catalyses [protein]-peptidylproline (omega=180) = [protein]-peptidylproline (omega=0). Functionally, PPIases accelerate the folding of proteins. It catalyzes the cis-trans isomerization of proline imidic peptide bonds in oligopeptides. Acts as a regulatory subunit for PP2A-like phosphatases modulating their activity or substrate specificity, probably by inducing a conformational change in the catalytic subunit, a direct target of the PPIase. Can reactivate inactive phosphatase PP2A-phosphatase methylesterase complexes (PP2Ai) in presence of ATP and Mg(2+) by dissociating the inactive form from the complex. This chain is Serine/threonine-protein phosphatase 2A activator, found in Encephalitozoon cuniculi (strain GB-M1) (Microsporidian parasite).